We begin with the raw amino-acid sequence, 54 residues long: Snake venom 5'-nucleotidase (54 aa).

Residues Asp-11 and His-13 each contribute to the Zn(2+) site. A glycan (N-linked (GlcNAc...) asparagine) is linked at Asn-46.

The protein belongs to the 5'-nucleotidase family. Zn(2+) is required as a cofactor. Post-translationally, venom 5'-nucleotidases (or a part thereof) may be released into the venom via exosome-like vesicles. They may be attached via a GPI anchor to the membrane of these vesicles. Soluble forms of 5'-nucleotidase might be released by cleavage of the ectodomain in the exosome-like vesicles or venom gland cells. Expressed by the venom gland.

The protein resides in the membrane. The enzyme catalyses a ribonucleoside 5'-phosphate + H2O = a ribonucleoside + phosphate. Its function is as follows. Hydrolyzes nucleotides into nucleosides. Snake venom 5'-nucleotidases are widely distributed among venomous snake taxa, but there is a lack of information about their biological activities. They have been shown to inhibit platelet aggregation. This effect may be due to the liberation of inhibitory AMP or adenosine by its action on ADP released upon initiation of aggregation. Venom 5'-nucleotidases are also known to synergistically act in vivo with other toxins like ADPases, phospholipases, and disintegrins to exert a more pronounced anti-coagulant effect. The sequence is that of Snake venom 5'-nucleotidase from Gloydius blomhoffii blomhoffii (Japanese mamushi).